The chain runs to 303 residues: Acetylglutamate kinase (303 aa).

Residues 76 to 77 (GG), arginine 98, and asparagine 199 contribute to the substrate site.

This sequence belongs to the acetylglutamate kinase family. ArgB subfamily.

The protein localises to the cytoplasm. It catalyses the reaction N-acetyl-L-glutamate + ATP = N-acetyl-L-glutamyl 5-phosphate + ADP. Its pathway is amino-acid biosynthesis; L-arginine biosynthesis; N(2)-acetyl-L-ornithine from L-glutamate: step 2/4. Catalyzes the ATP-dependent phosphorylation of N-acetyl-L-glutamate. The chain is Acetylglutamate kinase from Clavibacter michiganensis subsp. michiganensis (strain NCPPB 382).